The chain runs to 72 residues: Translation initiation factor IF-1 (72 aa).

The S1-like domain occupies 1–72; it reads MSKTDVVEIE…TKGRIIWRDK (72 aa).

This sequence belongs to the IF-1 family. Component of the 30S ribosomal translation pre-initiation complex which assembles on the 30S ribosome in the order IF-2 and IF-3, IF-1 and N-formylmethionyl-tRNA(fMet); mRNA recruitment can occur at any time during PIC assembly.

Its subcellular location is the cytoplasm. In terms of biological role, one of the essential components for the initiation of protein synthesis. Stabilizes the binding of IF-2 and IF-3 on the 30S subunit to which N-formylmethionyl-tRNA(fMet) subsequently binds. Helps modulate mRNA selection, yielding the 30S pre-initiation complex (PIC). Upon addition of the 50S ribosomal subunit IF-1, IF-2 and IF-3 are released leaving the mature 70S translation initiation complex. The protein is Translation initiation factor IF-1 of Lachnoclostridium phytofermentans (strain ATCC 700394 / DSM 18823 / ISDg) (Clostridium phytofermentans).